Consider the following 112-residue polypeptide: Large ribosomal subunit protein P2 (112 aa).

Residues 81–112 (VETAEAKKEDKKEEKKEEEEEEEDDLGFSLFG) form a disordered region. Residues 84-95 (AEAKKEDKKEEK) are compositionally biased toward basic and acidic residues. The span at 96-106 (KEEEEEEEDDL) shows a compositional bias: acidic residues.

It belongs to the eukaryotic ribosomal protein P1/P2 family. P1 and P2 exist as dimers at the large ribosomal subunit. In terms of processing, phosphorylated.

In terms of biological role, plays an important role in the elongation step of protein synthesis. The chain is Large ribosomal subunit protein P2 (MAL3P3.19) from Plasmodium falciparum (isolate 3D7).